Consider the following 442-residue polypeptide: C4-dicarboxylate transport protein (442 aa).

The next 8 helical transmembrane spans lie at 10–30 (VQVL…PSFG), 40–60 (FIKL…VSGI), 77–97 (LIYF…VANI), 149–169 (LLQV…LGTL), 185–205 (FVIL…AMAF), 221–241 (LMVA…GLIA), 288–308 (VVGL…SIYL), and 354–374 (AATL…ILGI). The disordered stretch occupies residues 420 to 442 (PATPEVAAEERGEGRGLDGPLPA).

The protein belongs to the dicarboxylate/amino acid:cation symporter (DAACS) (TC 2.A.23) family.

Its subcellular location is the cell membrane. Responsible for the transport of dicarboxylates such as succinate, fumarate, and malate across the membrane. This is C4-dicarboxylate transport protein from Deinococcus geothermalis (strain DSM 11300 / CIP 105573 / AG-3a).